A 141-amino-acid chain; its full sequence is Pheromone-binding protein-related protein 6 (141 aa).

Residues 1–16 (MVKYPLILLLIGCAAA) form the signal peptide. 3 disulfide bridges follow: Cys41–Cys72, Cys68–Cys120, and Cys111–Cys129.

The protein belongs to the PBP/GOBP family. In terms of tissue distribution, antenna. Mostly expressed in two types of sensory hairs, sensilla trichodea and small sensilla basiconica, in the ventro-lateral region of the third antennal segment (at protein level).

The protein localises to the secreted. This Drosophila melanogaster (Fruit fly) protein is Pheromone-binding protein-related protein 6 (Obp83b).